The chain runs to 423 residues: UPF0229 protein Pput_0430 (423 aa).

The disordered stretch occupies residues 81-108 (EFTAGEHIPRPQGGGGGGGRGKAGNSGE). A compositionally biased stretch (gly residues) spans 92–107 (QGGGGGGGRGKAGNSG).

Belongs to the UPF0229 family.

This Pseudomonas putida (strain ATCC 700007 / DSM 6899 / JCM 31910 / BCRC 17059 / LMG 24140 / F1) protein is UPF0229 protein Pput_0430.